We begin with the raw amino-acid sequence, 339 residues long: Dihydroorotate dehydrogenase (quinone) (339 aa).

FMN is bound by residues 62 to 66 and threonine 86; that span reads AGMDK. Position 66 (lysine 66) interacts with substrate. Position 111 to 115 (111 to 115) interacts with substrate; the sequence is NRMGF. Asparagine 139 and asparagine 172 together coordinate FMN. Asparagine 172 is a substrate binding site. The Nucleophile role is filled by serine 175. Asparagine 177 contacts substrate. Positions 217 and 245 each coordinate FMN. 246–247 contributes to the substrate binding site; it reads NT. FMN-binding positions include glycine 268, glycine 297, and 318–319; that span reads YS.

It belongs to the dihydroorotate dehydrogenase family. Type 2 subfamily. As to quaternary structure, monomer. The cofactor is FMN.

The protein resides in the cell membrane. The catalysed reaction is (S)-dihydroorotate + a quinone = orotate + a quinol. It functions in the pathway pyrimidine metabolism; UMP biosynthesis via de novo pathway; orotate from (S)-dihydroorotate (quinone route): step 1/1. Functionally, catalyzes the conversion of dihydroorotate to orotate with quinone as electron acceptor. This Shewanella piezotolerans (strain WP3 / JCM 13877) protein is Dihydroorotate dehydrogenase (quinone).